A 314-amino-acid chain; its full sequence is Ribosomal RNA large subunit methyltransferase F (314 aa).

The protein belongs to the methyltransferase superfamily. METTL16/RlmF family.

It localises to the cytoplasm. It catalyses the reaction adenosine(1618) in 23S rRNA + S-adenosyl-L-methionine = N(6)-methyladenosine(1618) in 23S rRNA + S-adenosyl-L-homocysteine + H(+). Specifically methylates the adenine in position 1618 of 23S rRNA. The polypeptide is Ribosomal RNA large subunit methyltransferase F (Flavobacterium psychrophilum (strain ATCC 49511 / DSM 21280 / CIP 103535 / JIP02/86)).